Here is a 151-residue protein sequence, read N- to C-terminus: Ribosome maturation factor RimP (151 aa).

Belongs to the RimP family.

The protein resides in the cytoplasm. Functionally, required for maturation of 30S ribosomal subunits. The protein is Ribosome maturation factor RimP of Synechocystis sp. (strain ATCC 27184 / PCC 6803 / Kazusa).